The chain runs to 328 residues: Ribosomal RNA large subunit methyltransferase F (328 aa).

Residues 1–38 form a disordered region; sequence MTDTPKPPRKKPQRPAKPAAPREKATLHPRNRHQGHYD.

This sequence belongs to the methyltransferase superfamily. METTL16/RlmF family.

It localises to the cytoplasm. It catalyses the reaction adenosine(1618) in 23S rRNA + S-adenosyl-L-methionine = N(6)-methyladenosine(1618) in 23S rRNA + S-adenosyl-L-homocysteine + H(+). Functionally, specifically methylates the adenine in position 1618 of 23S rRNA. This chain is Ribosomal RNA large subunit methyltransferase F, found in Pseudomonas syringae pv. tomato (strain ATCC BAA-871 / DC3000).